A 1004-amino-acid chain; its full sequence is Bifunctional glutamine synthetase adenylyltransferase/adenylyl-removing enzyme (1004 aa).

An adenylyl removase region spans residues 1–497 (MCCTTVVVVR…LHAKLFYQPL (497 aa)). The adenylyl transferase stretch occupies residues 502 to 1004 (GPASLEIRHG…KTFVRKVFGS (503 aa)).

It belongs to the GlnE family. The cofactor is Mg(2+).

It catalyses the reaction [glutamine synthetase]-O(4)-(5'-adenylyl)-L-tyrosine + phosphate = [glutamine synthetase]-L-tyrosine + ADP. The enzyme catalyses [glutamine synthetase]-L-tyrosine + ATP = [glutamine synthetase]-O(4)-(5'-adenylyl)-L-tyrosine + diphosphate. Functionally, involved in the regulation of glutamine synthetase GlnA, a key enzyme in the process to assimilate ammonia. When cellular nitrogen levels are high, the C-terminal adenylyl transferase (AT) inactivates GlnA by covalent transfer of an adenylyl group from ATP to specific tyrosine residue of GlnA, thus reducing its activity. Conversely, when nitrogen levels are low, the N-terminal adenylyl removase (AR) activates GlnA by removing the adenylyl group by phosphorolysis, increasing its activity. The regulatory region of GlnE binds the signal transduction protein PII (GlnB) which indicates the nitrogen status of the cell. The chain is Bifunctional glutamine synthetase adenylyltransferase/adenylyl-removing enzyme from Mycobacterium leprae (strain TN).